The chain runs to 322 residues: MEATAKFDFMASGEDELSFRTGDILKILSNQEEWLKAELGSQEGYVPKNFIDIEFPEWFHEGLSRHQAENLLMGKDIGFFIIRASQSSPGDFSISVRHEDDVQHFKVMRDTKGNYFLWTEKFPSLNKLVDYYRTTSISKQKQVFLRDGTQDQGHRGNSLDRRSQGGPHPSGTVGEEIRPSVNRKLSDHLPLGPQQFHPHQQPSPQFTPGPQPPQQQRYLQHFHQDRRGGSLDINDGHCGLGSEVNATLMHRRHTDPVQLQAAGRVRWARALYDFEALEEDELGFRSGEVVEVLDSSNPSWWTGRLHNKLGLFPANYVAPMMR.

One can recognise an SH3 1 domain in the interval 1–56 (MEATAKFDFMASGEDELSFRTGDILKILSNQEEWLKAELGSQEGYVPKNFIDIEFP). A Phosphotyrosine modification is found at Y45. Residues 58–149 (WFHEGLSRHQ…QKQVFLRDGT (92 aa)) form the SH2 domain. An N6-acetyllysine modification is found at K106. The tract at residues 143–216 (VFLRDGTQDQ…TPGPQPPQQQ (74 aa)) is disordered. The segment covering 148–163 (GTQDQGHRGNSLDRRS) has biased composition (basic and acidic residues). S186 is modified (phosphoserine). The segment covering 193-204 (PQQFHPHQQPSP) has biased composition (low complexity). The residue at position 230 (S230) is a Phosphoserine. At T254 the chain carries Phosphothreonine. Residues 263–322 (GRVRWARALYDFEALEEDELGFRSGEVVEVLDSSNPSWWTGRLHNKLGLFPANYVAPMMR) enclose the SH3 2 domain.

The protein belongs to the GRB2/sem-5/DRK family. Interacts with phosphorylated LAT and LAX1 upon TCR activation. Interacts with SHB. Interacts with PTPN23. Interacts with phosphorylated LIME1 upon TCR activation.

Its subcellular location is the nucleus. It localises to the cytoplasm. It is found in the endosome. Functionally, interacts with SLP-76 to regulate NF-AT activation. Binds to tyrosine-phosphorylated shc. The sequence is that of GRB2-related adaptor protein 2 (Grap2) from Mus musculus (Mouse).